Consider the following 28-residue polypeptide: Cruzioseptin-3 (28 aa).

Glutamine 25 is subject to Glutamine amide. Residues 27–28 (EQ) constitute a propeptide that is removed on maturation.

In terms of tissue distribution, expressed by the skin glands.

The protein resides in the secreted. Its function is as follows. Has antimicrobial activity against Gram-negative bacterium E.coli (MIC=13.32 uM), against Gram-positive bacterium S.aureus (MIC=13.32 uM) and against fungus C.albicans (MIC=13.32 uM). At higher concentrations also has a bactericidal and fungicidal effect. Has hemagglutinating activity against horse erythrocytes. The chain is Cruzioseptin-3 from Cruziohyla calcarifer (Splendid leaf frog).